We begin with the raw amino-acid sequence, 369 residues long: Histidinol-phosphate aminotransferase 2 (369 aa).

Lysine 231 is modified (N6-(pyridoxal phosphate)lysine).

The protein belongs to the class-II pyridoxal-phosphate-dependent aminotransferase family. Histidinol-phosphate aminotransferase subfamily. In terms of assembly, homodimer. The cofactor is pyridoxal 5'-phosphate.

It carries out the reaction L-histidinol phosphate + 2-oxoglutarate = 3-(imidazol-4-yl)-2-oxopropyl phosphate + L-glutamate. It functions in the pathway amino-acid biosynthesis; L-histidine biosynthesis; L-histidine from 5-phospho-alpha-D-ribose 1-diphosphate: step 7/9. This is Histidinol-phosphate aminotransferase 2 from Legionella pneumophila (strain Lens).